The sequence spans 151 residues: MEGQRQESHATLTLAQAHFNNGEYAEAEALYSAYIRRCACAASSDESPGSKCSPEDLATAYNNRGQIKYFRVDFYEAMDDYTSAIEVQPNFEVPYYNRGLILYRLGYFDDALEDFKKVLDLNPGFQDATLSLKQTILDKEEKQRRNVAKNY.

TPR repeat units lie at residues 8 to 41 (SHAT…CACA), 58 to 91 (ATAY…QPNF), and 92 to 125 (EVPY…NPGF).

The protein is Tetratricopeptide repeat protein 32 (TTC32) of Homo sapiens (Human).